The chain runs to 292 residues: MITGSIVAIVTPMHEDGSLDFPRLRSLIDWHVAEGTDGIVIVGTTGESPTVSVDEHCELIRVAVEHAAGRIPVIAGTGANSTAEAIALARYAQQAGAVAHLSVVPYYNRPSQEGLYQHFRSVAEAVELPLILYNVPGRTVADLSNDTALRLAEIPNIIGLKDATGSIDRACDLIERAPEGFALYSGDDMTVAAFILLGGHGTISVTANVAPRAMHEMCAAALAGDAAKARTINARLVGLHRHLFCEANPIPVKWAVQRMGLVEGGLRLPLTPLAESFHDRVLTAMRQAGIQA.

Thr-45 contributes to the pyruvate binding site. The active-site Proton donor/acceptor is the Tyr-133. Lys-161 acts as the Schiff-base intermediate with substrate in catalysis. A pyruvate-binding site is contributed by Ile-203.

The protein belongs to the DapA family. As to quaternary structure, homotetramer; dimer of dimers.

It is found in the cytoplasm. The catalysed reaction is L-aspartate 4-semialdehyde + pyruvate = (2S,4S)-4-hydroxy-2,3,4,5-tetrahydrodipicolinate + H2O + H(+). It participates in amino-acid biosynthesis; L-lysine biosynthesis via DAP pathway; (S)-tetrahydrodipicolinate from L-aspartate: step 3/4. Catalyzes the condensation of (S)-aspartate-beta-semialdehyde [(S)-ASA] and pyruvate to 4-hydroxy-tetrahydrodipicolinate (HTPA). The protein is 4-hydroxy-tetrahydrodipicolinate synthase of Azoarcus sp. (strain BH72).